We begin with the raw amino-acid sequence, 70 residues long: Small ribosomal subunit protein bS18c (70 aa).

Belongs to the bacterial ribosomal protein bS18 family. In terms of assembly, part of the 30S ribosomal subunit.

The protein localises to the plastid. Its subcellular location is the chloroplast. The sequence is that of Small ribosomal subunit protein bS18c from Gracilaria tenuistipitata var. liui (Red alga).